Reading from the N-terminus, the 215-residue chain is UPF0056 membrane protein YhcE (215 aa).

Helical transmembrane passes span 14-34, 54-74, 81-101, 120-140, 147-167, and 189-209; these read FFIGLFALVNPVGIIPVFISM, VAIILWISLFLGDTILQLFGI, IAGGILVVTIAMSMISGKLGE, VVPLALPLMAGPGAISSTIVW, ISYLFGFFVAIALFALCCWGL, and IMGLLLMALGIEFIVTGIKGI.

Belongs to the UPF0056 (MarC) family.

The protein localises to the cell membrane. The polypeptide is UPF0056 membrane protein YhcE (ychE) (Escherichia coli (strain K12)).